The following is a 446-amino-acid chain: Phosphoglucosamine mutase (446 aa).

Residue S100 is the Phosphoserine intermediate of the active site. Mg(2+) is bound by residues S100, D241, D243, and D245. S100 is subject to Phosphoserine.

It belongs to the phosphohexose mutase family. Mg(2+) is required as a cofactor. In terms of processing, activated by phosphorylation.

The enzyme catalyses alpha-D-glucosamine 1-phosphate = D-glucosamine 6-phosphate. Its function is as follows. Catalyzes the conversion of glucosamine-6-phosphate to glucosamine-1-phosphate. The sequence is that of Phosphoglucosamine mutase from Methylobacterium sp. (strain 4-46).